Here is a 137-residue protein sequence, read N- to C-terminus: Large ribosomal subunit protein uL16 (137 aa).

It belongs to the universal ribosomal protein uL16 family. As to quaternary structure, part of the 50S ribosomal subunit.

Its function is as follows. Binds 23S rRNA and is also seen to make contacts with the A and possibly P site tRNAs. The protein is Large ribosomal subunit protein uL16 of Hydrogenovibrio crunogenus (strain DSM 25203 / XCL-2) (Thiomicrospira crunogena).